The chain runs to 314 residues: Calcium homeostasis modulator protein 4 (314 aa).

The Cytoplasmic portion of the chain corresponds to Met-1 to Arg-14. A helical membrane pass occupies residues Asn-15–Ser-37. The Extracellular segment spans residues Thr-38–Asn-48. Disulfide bonds link Cys-41-Cys-131 and Cys-43-Cys-162. The helical transmembrane segment at Phe-49 to Arg-71 threads the bilayer. The Cytoplasmic portion of the chain corresponds to Ser-72 to Arg-103. A helical membrane pass occupies residues Phe-104 to Tyr-129. Residues Glu-130–Tyr-183 lie on the Extracellular side of the membrane. The helical transmembrane segment at Gln-184–Ala-207 threads the bilayer. The Cytoplasmic segment spans residues Lys-208–Pro-314.

The protein belongs to the CALHM family. Oligomerizes to form decameric and undecameric channels. Two hemichannels can assemble in a tail-to-tail manner to form a gap junction. In terms of tissue distribution, placenta.

It localises to the cell membrane. Functionally, may assemble to form gap junction channel-like structures involved in intercellular communication. Channel gating and ion conductance are likely regulated by membrane lipids rather than by membrane depolarization or extracellular calcium levels. The chain is Calcium homeostasis modulator protein 4 from Homo sapiens (Human).